Reading from the N-terminus, the 428-residue chain is Probable protein phosphatase 2C 12 (428 aa).

A PPM-type phosphatase domain is found at 24-293; it reads KIDNPELIHG…DDTTCIVVDI (270 aa). Positions 69, 70, 245, and 284 each coordinate Mn(2+). The segment at 301-331 is disordered; it reads ASVPPPKKQGKGMLKSMFKRKTSDSSSNIEK.

The protein belongs to the PP2C family. Requires Mg(2+) as cofactor. Mn(2+) serves as cofactor.

It catalyses the reaction O-phospho-L-seryl-[protein] + H2O = L-seryl-[protein] + phosphate. It carries out the reaction O-phospho-L-threonyl-[protein] + H2O = L-threonyl-[protein] + phosphate. This chain is Probable protein phosphatase 2C 12, found in Arabidopsis thaliana (Mouse-ear cress).